A 490-amino-acid polypeptide reads, in one-letter code: MARFEEQKLYIGGRYVEASSGATFETINPANGEVLAKVQRASREDVERAVQSAVEGQKVWAAMTAMQRSRILRRAVDILRERNDELAALETLDTGKPLAETRSVDIVTGADVLEYYAGLVPAIEGEQIPLRETSFVYTRREPLGVVAGIGAWNYPVQIALWKSAPALAAGNAMIFKPSEVTPLTALKLAEIYTEAGVPDGVFNVLTGSGREVGQWLTEHPLIEKISFTGGTSTGKKVMASASSSSLKEVTMELGGKSPLIIFPDADLDRAADIAVMANFFSSGQVCTNGTRVFIHRSQQARFEAKVLERVQRIRLGDPQDENTNFGPLVSFPHMESVLGYIESGKAQKARLLCGGERVTDGAFGKGAYVAPTVFTDCRDDMTIVREEIFGPVMSILVYDDEDEAIRRANDTEYGLAAGVVTQDLARAHRAIHRLEAGICWINTWGESPAEMPVGGYKQSGVGRENGLTTLAHYTRIKSVQVELGDYASVF.

Thr26, Ile27, and Asp93 together coordinate K(+). 150 to 153 lines the NADPH pocket; that stretch reads GAWN. Lys162 functions as the Charge relay system in the catalytic mechanism. Residue 176–179 participates in NADPH binding; the sequence is KPSE. Val180 is a binding site for K(+). NADPH-binding positions include Gly209 and 230–233; that span reads GTST. Leu246 provides a ligand contact to K(+). Glu252 functions as the Proton acceptor in the catalytic mechanism. NADPH-binding residues include Cys286 and Glu387. Residue Cys286 is the Nucleophile of the active site. Cys286 is subject to Cysteine sulfenic acid (-SOH). K(+) contacts are provided by Lys457 and Gly460. Catalysis depends on Glu464, which acts as the Charge relay system.

This sequence belongs to the aldehyde dehydrogenase family. Dimer of dimers. Requires K(+) as cofactor.

It carries out the reaction betaine aldehyde + NAD(+) + H2O = glycine betaine + NADH + 2 H(+). The enzyme catalyses betaine aldehyde + NADP(+) + H2O = glycine betaine + NADPH + 2 H(+). Its pathway is amine and polyamine biosynthesis; betaine biosynthesis via choline pathway; betaine from betaine aldehyde: step 1/1. In terms of biological role, involved in the biosynthesis of the osmoprotectant glycine betaine. Catalyzes the irreversible oxidation of betaine aldehyde to the corresponding acid. In P.aeruginosa this reaction is a compulsory step in the assimilation of carbon and nitrogen when bacteria are growing in choline or choline precursors. Can use NADP(+) with similar efficiency to NAD(+), a property that can be used by the bacterium to produce the NADPH needed to combat the oxidative stress imposed by the host defenses. The chain is NAD/NADP-dependent betaine aldehyde dehydrogenase from Pseudomonas aeruginosa (strain ATCC 15692 / DSM 22644 / CIP 104116 / JCM 14847 / LMG 12228 / 1C / PRS 101 / PAO1).